The chain runs to 141 residues: Large ribosomal subunit protein uL11c (141 aa).

The protein belongs to the universal ribosomal protein uL11 family. Part of the ribosomal stalk of the 50S ribosomal subunit. Interacts with L10 and the large rRNA to form the base of the stalk. L10 forms an elongated spine to which L12 dimers bind in a sequential fashion forming a multimeric L10(L12)X complex.

Its subcellular location is the plastid. It localises to the chloroplast. Its function is as follows. Forms part of the ribosomal stalk which helps the ribosome interact with GTP-bound translation factors. The sequence is that of Large ribosomal subunit protein uL11c from Trieres chinensis (Marine centric diatom).